Reading from the N-terminus, the 351-residue chain is L-threonine 3-dehydrogenase (351 aa).

Zn(2+) is bound at residue Cys-39. Active-site charge relay system residues include Thr-41 and His-44. Zn(2+) contacts are provided by His-64, Glu-65, Cys-94, Cys-97, Cys-100, and Cys-108. NAD(+)-binding positions include Ile-176, Asp-196, Arg-201, 271-273 (LGI), and 295-296 (IY).

Belongs to the zinc-containing alcohol dehydrogenase family. As to quaternary structure, homotetramer. Zn(2+) is required as a cofactor.

The protein localises to the cytoplasm. The enzyme catalyses L-threonine + NAD(+) = (2S)-2-amino-3-oxobutanoate + NADH + H(+). The protein operates within amino-acid degradation; L-threonine degradation via oxydo-reductase pathway; glycine from L-threonine: step 1/2. Functionally, catalyzes the NAD(+)-dependent oxidation of L-threonine to 2-amino-3-ketobutyrate. This chain is L-threonine 3-dehydrogenase, found in Francisella tularensis subsp. holarctica (strain OSU18).